The primary structure comprises 626 residues: Chaperone protein HtpG (626 aa).

Residues 1 to 339 (MSQNQETRGF…SNDLPLNVSR (339 aa)) are a; substrate-binding. The b stretch occupies residues 340-555 (EILQDNKITA…NDQMTTQMAK (216 aa)). The c stretch occupies residues 556–626 (LFAAAGQPVP…FIKRINKLLG (71 aa)).

This sequence belongs to the heat shock protein 90 family. Homodimer.

The protein localises to the cytoplasm. Molecular chaperone. Has ATPase activity. This chain is Chaperone protein HtpG, found in Haemophilus influenzae (strain PittEE).